The chain runs to 364 residues: Fructose-1,6-bisphosphatase class 1 2 (364 aa).

Positions 99, 121, 123, and 124 each coordinate Mg(2+). Substrate is bound by residues 124–127 and Asn-220; that span reads DGSS. Mg(2+) is bound at residue Glu-292.

Belongs to the FBPase class 1 family. Homotetramer. Requires Mg(2+) as cofactor.

It localises to the cytoplasm. The catalysed reaction is beta-D-fructose 1,6-bisphosphate + H2O = beta-D-fructose 6-phosphate + phosphate. It participates in carbohydrate biosynthesis; gluconeogenesis. This is Fructose-1,6-bisphosphatase class 1 2 from Polaromonas naphthalenivorans (strain CJ2).